The sequence spans 253 residues: Tropomyosin-1 (253 aa).

Positions 7–253 form a coiled coil; that stretch reads VNKLVRLQGK…MDDVGDDDTQ (247 aa).

It belongs to the tropomyosin family. As to quaternary structure, homodimer.

In terms of biological role, tropomyosin, in association with the troponin complex, plays a central role in the calcium dependent regulation of muscle contraction. The sequence is that of Tropomyosin-1 (TROP1) from Hydra vulgaris (Hydra).